The following is a 246-amino-acid chain: Acetoacetate decarboxylase (246 aa).

The active-site Schiff-base intermediate with acetoacetate is Lys116.

It belongs to the ADC family.

It catalyses the reaction acetoacetate + H(+) = acetone + CO2. In terms of biological role, catalyzes the conversion of acetoacetate to acetone and carbon dioxide. This Burkholderia ambifaria (strain MC40-6) protein is Acetoacetate decarboxylase.